We begin with the raw amino-acid sequence, 122 residues long: Acidic phospholipase A2 2 (122 aa).

7 cysteine pairs are disulfide-bonded: Cys-26/Cys-115, Cys-28/Cys-44, Cys-43/Cys-95, Cys-49/Cys-122, Cys-50/Cys-88, Cys-57/Cys-81, and Cys-75/Cys-86. Positions 27, 29, and 31 each coordinate Ca(2+). Residue His-47 is part of the active site. Position 48 (Asp-48) interacts with Ca(2+). Residue Asp-89 is part of the active site.

This sequence belongs to the phospholipase A2 family. Group II subfamily. D49 sub-subfamily. Ca(2+) serves as cofactor. Expressed by the venom gland.

It localises to the secreted. It carries out the reaction a 1,2-diacyl-sn-glycero-3-phosphocholine + H2O = a 1-acyl-sn-glycero-3-phosphocholine + a fatty acid + H(+). Functionally, snake venom phospholipase A2 (PLA2) that has high lipolytic activity. PLA2 catalyzes the calcium-dependent hydrolysis of the 2-acyl groups in 3-sn-phosphoglycerides. This chain is Acidic phospholipase A2 2, found in Craspedocephalus gramineus (Bamboo pit viper).